The following is a 163-amino-acid chain: Cyclic pyranopterin monophosphate synthase (163 aa).

Residues 75 to 77 and 113 to 114 contribute to the substrate site; these read MCH and ME. The active site involves Asp128.

It belongs to the MoaC family. Homohexamer; trimer of dimers.

The catalysed reaction is (8S)-3',8-cyclo-7,8-dihydroguanosine 5'-triphosphate = cyclic pyranopterin phosphate + diphosphate. It functions in the pathway cofactor biosynthesis; molybdopterin biosynthesis. In terms of biological role, catalyzes the conversion of (8S)-3',8-cyclo-7,8-dihydroguanosine 5'-triphosphate to cyclic pyranopterin monophosphate (cPMP). The polypeptide is Cyclic pyranopterin monophosphate synthase (Desulforapulum autotrophicum (strain ATCC 43914 / DSM 3382 / VKM B-1955 / HRM2) (Desulfobacterium autotrophicum)).